A 683-amino-acid polypeptide reads, in one-letter code: Hexamerin 70b (683 aa).

An N-terminal signal peptide occupies residues 1 to 21 (MIVIMKAGFLFLASLCLLVQA). The 122-residue stretch at 32–153 (VTRQKNIYEL…VAVIHRPDTK (122 aa)) folds into the Hemocyanin N-terminal domain. One can recognise a Hemocyanin middle domain in the interval 159–428 (PMYEVMPHLY…SIYKTILDYY (270 aa)). Asn-203 is a glycosylation site (N-linked (GlcNAc...) asparagine). Residues 437-673 (KYTTEELNFP…IHVKEVLVHH (237 aa)) form the Hemocyanin C-terminal domain.

It belongs to the hemocyanin/hexamerin family. Probable homohexamer. In terms of tissue distribution, expressed in the fat body and secreted into the hemolymph (at protein level). Present in trophocytes and oenocytes of the fat body (at protein level).

The protein resides in the secreted. It is found in the nucleus. The protein localises to the cytoplasm. Its subcellular location is the cytoplasmic granule. In terms of biological role, storage protein that may function as a nutrient supply to compensate for lack of dietary proteins during metamorphosis and egg production. The chain is Hexamerin 70b from Apis mellifera (Honeybee).